A 153-amino-acid chain; its full sequence is Small ribosomal subunit protein uS12m (153 aa).

Residues 1 to 20 (MLSRFMSNTWCTPLRQAQRL) constitute a mitochondrion transit peptide.

The protein belongs to the universal ribosomal protein uS12 family. In terms of assembly, component of the mitochondrial small ribosomal subunit (mt-SSU). Mature yeast 74S mitochondrial ribosomes consist of a small (37S) and a large (54S) subunit. The 37S small subunit contains a 15S ribosomal RNA (15S mt-rRNA) and 34 different proteins. The 54S large subunit contains a 21S rRNA (21S mt-rRNA) and 46 different proteins. uS12m forms part of the decoding center of the mt-SSU.

It is found in the mitochondrion. Its function is as follows. Component of the mitochondrial ribosome (mitoribosome), a dedicated translation machinery responsible for the synthesis of mitochondrial genome-encoded proteins, including at least some of the essential transmembrane subunits of the mitochondrial respiratory chain. The mitoribosomes are attached to the mitochondrial inner membrane and translation products are cotranslationally integrated into the membrane. uS12m is required for respiratory growth. This Saccharomyces cerevisiae (strain ATCC 204508 / S288c) (Baker's yeast) protein is Small ribosomal subunit protein uS12m (MRPS12).